The following is a 42-amino-acid chain: Hemoglobin subunit beta-A (42 aa).

A Globin domain is found at 2-42 (EWTDAERSAILSLWGKIDTDELGPALLARLXLVXXXTQRYF).

Belongs to the globin family. Heterotetramer of two alpha chains and two beta chains. In terms of tissue distribution, red blood cells.

Involved in oxygen transport from gills to the various peripheral tissues. This chain is Hemoglobin subunit beta-A, found in Catostomus clarkii (Desert sucker).